The following is a 1435-amino-acid chain: Probable ATP-dependent DNA helicase HFM1 (1435 aa).

In terms of domain architecture, Helicase ATP-binding spans Asp290 to Val478. Residue Ala303–Thr310 coordinates ATP. The DEAH box motif lies at Asp411 to His414. The Helicase C-terminal domain maps to Ser519–Arg720. An SEC63 domain is found at Pro777 to Val1092. The disordered stretch occupies residues Lys1109–Gly1139. The segment at Cys1143–Cys1158 adopts a C4-type zinc-finger fold. Residues Gly1295–Lys1315 form a disordered region. Over residues Phe1296–Gly1306 the composition is skewed to polar residues.

Belongs to the helicase family. SKI2 subfamily. It depends on Zn(2+) as a cofactor. Preferentially expressed in testis and ovary.

It carries out the reaction Couples ATP hydrolysis with the unwinding of duplex DNA by translocating in the 3'-5' direction.. The enzyme catalyses ATP + H2O = ADP + phosphate + H(+). Required for crossover formation and complete synapsis of homologous chromosomes during meiosis. This Homo sapiens (Human) protein is Probable ATP-dependent DNA helicase HFM1 (HFM1).